We begin with the raw amino-acid sequence, 29 residues long: Cytolysin Oshem 1 (29 aa).

It localises to the secreted. Its subcellular location is the nematocyst. It is found in the target cell membrane. Functionally, cytolysin that shows moderate hemolysis and moderate myonecrosis. The protein is Cytolysin Oshem 1 of Olindias sambaquiensis (Hydromedusa).